Here is a 181-residue protein sequence, read N- to C-terminus: Segregation and condensation protein B (181 aa).

The protein belongs to the ScpB family. As to quaternary structure, homodimer. Homodimerization may be required to stabilize the binding of ScpA to the Smc head domains. Component of a cohesin-like complex composed of ScpA, ScpB and the Smc homodimer, in which ScpA and ScpB bind to the head domain of Smc. The presence of the three proteins is required for the association of the complex with DNA.

Its subcellular location is the cytoplasm. Participates in chromosomal partition during cell division. May act via the formation of a condensin-like complex containing Smc and ScpA that pull DNA away from mid-cell into both cell halves. This is Segregation and condensation protein B from Desulforamulus reducens (strain ATCC BAA-1160 / DSM 100696 / MI-1) (Desulfotomaculum reducens).